Here is a 175-residue protein sequence, read N- to C-terminus: NADH-ubiquinone oxidoreductase chain 6 (175 aa).

5 helical membrane-spanning segments follow: residues 1–21 (MMTY…VGFS), 25–45 (SPIY…GIVM), 47–67 (FGGS…MLVV), 88–108 (VVMG…LCVL), and 149–169 (YGVW…IVVL).

The protein belongs to the complex I subunit 6 family.

Its subcellular location is the mitochondrion membrane. It catalyses the reaction a ubiquinone + NADH + 5 H(+)(in) = a ubiquinol + NAD(+) + 4 H(+)(out). Core subunit of the mitochondrial membrane respiratory chain NADH dehydrogenase (Complex I) that is believed to belong to the minimal assembly required for catalysis. Complex I functions in the transfer of electrons from NADH to the respiratory chain. The immediate electron acceptor for the enzyme is believed to be ubiquinone. The sequence is that of NADH-ubiquinone oxidoreductase chain 6 (MT-ND6) from Rhinolophus monoceros (Formosan lesser horseshoe bat).